Reading from the N-terminus, the 219-residue chain is Chalcone--flavanone isomerase (219 aa).

Residues threonine 50, asparagine 115, and serine 188 each coordinate substrate.

This sequence belongs to the chalcone isomerase family.

The catalysed reaction is a chalcone = a flavanone.. It functions in the pathway secondary metabolite biosynthesis; flavonoid biosynthesis. Catalyzes the intramolecular cyclization of bicyclic chalcones into tricyclic (S)-flavanones. Responsible for the isomerization of 4,2',4',6'-tetrahydroxychalcone (also termed chalcone) into naringenin. The chain is Chalcone--flavanone isomerase (CHI) from Clitoria ternatea (Butterfly pea).